Consider the following 306-residue polypeptide: NAD kinase 1 (306 aa).

The Proton acceptor role is filled by D67. Residues D67 to G68, N149 to D150, and D181 each bind NAD(+).

This sequence belongs to the NAD kinase family. The cofactor is a divalent metal cation.

The protein localises to the cytoplasm. The enzyme catalyses NAD(+) + ATP = ADP + NADP(+) + H(+). Functionally, involved in the regulation of the intracellular balance of NAD and NADP, and is a key enzyme in the biosynthesis of NADP. Catalyzes specifically the phosphorylation on 2'-hydroxyl of the adenosine moiety of NAD to yield NADP. This chain is NAD kinase 1, found in Synechococcus sp. (strain ATCC 27144 / PCC 6301 / SAUG 1402/1) (Anacystis nidulans).